A 502-amino-acid chain; its full sequence is Lysine--tRNA ligase (502 aa).

Residues glutamate 399 and glutamate 406 each coordinate Mg(2+).

This sequence belongs to the class-II aminoacyl-tRNA synthetase family. Homodimer. Mg(2+) is required as a cofactor.

It is found in the cytoplasm. It carries out the reaction tRNA(Lys) + L-lysine + ATP = L-lysyl-tRNA(Lys) + AMP + diphosphate. This Synechococcus sp. (strain RCC307) protein is Lysine--tRNA ligase.